A 205-amino-acid polypeptide reads, in one-letter code: Recombination protein RecR (205 aa).

A C4-type zinc finger spans residues 60 to 75 (CKVCHNISDTETCRIC). Residues 83 to 178 (STICVVESIR…KLSVIARGIS (96 aa)) form the Toprim domain.

Belongs to the RecR family.

Its function is as follows. May play a role in DNA repair. It seems to be involved in an RecBC-independent recombinational process of DNA repair. It may act with RecF and RecO. The sequence is that of Recombination protein RecR from Phocaeicola vulgatus (strain ATCC 8482 / DSM 1447 / JCM 5826 / CCUG 4940 / NBRC 14291 / NCTC 11154) (Bacteroides vulgatus).